The chain runs to 462 residues: ATP synthase subunit beta 1 (462 aa).

An ATP-binding site is contributed by Gly-151–Thr-158.

This sequence belongs to the ATPase alpha/beta chains family. As to quaternary structure, F-type ATPases have 2 components, CF(1) - the catalytic core - and CF(0) - the membrane proton channel. CF(1) has five subunits: alpha(3), beta(3), gamma(1), delta(1), epsilon(1). CF(0) has four main subunits: a(1), b(1), b'(1) and c(9-12).

The protein resides in the cell inner membrane. The catalysed reaction is ATP + H2O + 4 H(+)(in) = ADP + phosphate + 5 H(+)(out). Its function is as follows. Produces ATP from ADP in the presence of a proton gradient across the membrane. The catalytic sites are hosted primarily by the beta subunits. In Chlorobium luteolum (strain DSM 273 / BCRC 81028 / 2530) (Pelodictyon luteolum), this protein is ATP synthase subunit beta 1.